We begin with the raw amino-acid sequence, 355 residues long: Dihydroorotate dehydrogenase (quinone) (355 aa).

FMN-binding positions include Ala-68 to Lys-72 and Thr-92. A substrate-binding site is contributed by Lys-72. Asn-117–Phe-121 provides a ligand contact to substrate. Asn-154 and Asn-190 together coordinate FMN. A substrate-binding site is contributed by Asn-190. Ser-193 functions as the Nucleophile in the catalytic mechanism. Substrate is bound at residue Asn-195. Residues Lys-232 and Thr-260 each coordinate FMN. Asn-261 to Thr-262 contributes to the substrate binding site. Residues Gly-286, Gly-315, and Tyr-336–Ser-337 each bind FMN.

The protein belongs to the dihydroorotate dehydrogenase family. Type 2 subfamily. As to quaternary structure, monomer. It depends on FMN as a cofactor.

It is found in the cell membrane. It catalyses the reaction (S)-dihydroorotate + a quinone = orotate + a quinol. It participates in pyrimidine metabolism; UMP biosynthesis via de novo pathway; orotate from (S)-dihydroorotate (quinone route): step 1/1. Catalyzes the conversion of dihydroorotate to orotate with quinone as electron acceptor. The polypeptide is Dihydroorotate dehydrogenase (quinone) (Nocardioides sp. (strain ATCC BAA-499 / JS614)).